Consider the following 199-residue polypeptide: Recombination protein RecR (199 aa).

The C4-type zinc-finger motif lies at 58-73 (CQTCHHLSAEPTCEIC). In terms of domain architecture, Toprim spans 81–175 (GQICVVADSR…RVSRIAYGLP (95 aa)).

Belongs to the RecR family.

May play a role in DNA repair. It seems to be involved in an RecBC-independent recombinational process of DNA repair. It may act with RecF and RecO. The polypeptide is Recombination protein RecR (Synechococcus sp. (strain WH7803)).